The following is a 349-amino-acid chain: Oxygen-dependent coproporphyrinogen-III oxidase (349 aa).

2 disordered regions span residues 1-21 (MGASENLGQGPPPPHSRKRAR) and 37-60 (SLDGGQSFRTDSWERPEGGGGRSK). Ser105 serves as a coordination point for substrate. His109 and His119 together coordinate a divalent metal cation. His119 (proton donor) is an active-site residue. Residue 121 to 123 (NYR) coordinates substrate. Residues His153 and His183 each contribute to the a divalent metal cation site. Residues 273-308 (YAEFNLVWDRGTIFGLQTNGRTESILMSLPPLARWE) form an important for dimerization region.

It belongs to the aerobic coproporphyrinogen-III oxidase family. As to quaternary structure, homodimer. The cofactor is a divalent metal cation.

It localises to the cytoplasm. The enzyme catalyses coproporphyrinogen III + O2 + 2 H(+) = protoporphyrinogen IX + 2 CO2 + 2 H2O. The protein operates within porphyrin-containing compound metabolism; protoporphyrin-IX biosynthesis; protoporphyrinogen-IX from coproporphyrinogen-III (O2 route): step 1/1. Its function is as follows. Involved in the heme and chlorophyll biosynthesis. Catalyzes the aerobic oxidative decarboxylation of propionate groups of rings A and B of coproporphyrinogen-III to yield the vinyl groups in protoporphyrinogen-IX. This is Oxygen-dependent coproporphyrinogen-III oxidase from Prochlorococcus marinus (strain MIT 9313).